A 572-amino-acid polypeptide reads, in one-letter code: Phosphoglucomutase-1 (572 aa).

Residues Thr23, Arg27, 126–127 (SH), and Lys140 contribute to the substrate site. Ser126 acts as the Phosphoserine intermediate in catalysis. Residue Ser126 participates in Mg(2+) binding. The Mg(2+) site is built by Asp308, Asp310, and Asp312. Substrate is bound by residues 312–313 (DR), Thr373, 392–394 (EES), Lys405, and Arg527.

This sequence belongs to the phosphohexose mutase family. It depends on Mg(2+) as a cofactor. In terms of processing, phosphorylated via a calcium-dependent protein kinase. Very rapidly (within 80 ms) dephosphorylated during triggered trichocyst exocytosis. O-glycosylated with a short chain of mannose residues.

Its subcellular location is the cytoplasm. It carries out the reaction alpha-D-glucose 1-phosphate = alpha-D-glucose 6-phosphate. Its function is as follows. May be involved in membrane fusion in exocytosis. The protein is Phosphoglucomutase-1 (pp63-1) of Paramecium tetraurelia.